The sequence spans 250 residues: Diaminopimelate epimerase (250 aa).

Substrate is bound by residues Asn11 and Asn60. Cys69 serves as the catalytic Proton donor. Substrate-binding positions include 70–71, Asn164, and 182–183; these read GN and ER. The active-site Proton acceptor is Cys192. 193 to 194 contributes to the substrate binding site; the sequence is GT.

It belongs to the diaminopimelate epimerase family. As to quaternary structure, homodimer.

The protein resides in the cytoplasm. It catalyses the reaction (2S,6S)-2,6-diaminopimelate = meso-2,6-diaminopimelate. Its pathway is amino-acid biosynthesis; L-lysine biosynthesis via DAP pathway; DL-2,6-diaminopimelate from LL-2,6-diaminopimelate: step 1/1. In terms of biological role, catalyzes the stereoinversion of LL-2,6-diaminopimelate (L,L-DAP) to meso-diaminopimelate (meso-DAP), a precursor of L-lysine and an essential component of the bacterial peptidoglycan. The protein is Diaminopimelate epimerase of Nitratiruptor sp. (strain SB155-2).